We begin with the raw amino-acid sequence, 176 residues long: Nucleoside triphosphate/diphosphate phosphatase (176 aa).

The active-site Proton donor is Arg23. Asn87, Asp103, Asp105, Asp107, Asp120, and Glu123 together coordinate Mg(2+).

The protein belongs to the Ntdp family. Requires Mg(2+) as cofactor.

The catalysed reaction is a ribonucleoside 5'-triphosphate + H2O = a ribonucleoside 5'-diphosphate + phosphate + H(+). The enzyme catalyses a ribonucleoside 5'-diphosphate + H2O = a ribonucleoside 5'-phosphate + phosphate + H(+). Its function is as follows. Has nucleoside phosphatase activity towards nucleoside triphosphates and nucleoside diphosphates. The chain is Nucleoside triphosphate/diphosphate phosphatase from Bacillus cereus (strain G9842).